Here is a 451-residue protein sequence, read N- to C-terminus: Cytosolic Fe-S cluster assembly factor NAR1 (451 aa).

Cys20, Cys56, Cys59, Cys62, Cys166, Cys213, Cys382, and Cys386 together coordinate [4Fe-4S] cluster.

The protein belongs to the NARF family.

In terms of biological role, component of the cytosolic Fe/S protein assembly machinery. Required for maturation of extramitochondrial Fe/S proteins. May play a role in the transfer of pre-assembled Fe/S clusters to target apoproteins. The polypeptide is Cytosolic Fe-S cluster assembly factor NAR1 (NAR1) (Eremothecium gossypii (strain ATCC 10895 / CBS 109.51 / FGSC 9923 / NRRL Y-1056) (Yeast)).